Here is a 75-residue protein sequence, read N- to C-terminus: Mu-conotoxin GIIIA (75 aa).

A signal peptide spans 1–20; the sequence is MMSKLGVLLTICLLLFPLTA. The propeptide occupies 21-51; the sequence is LPMDGDEPANRPVERMQDNISSEQYPLFEKR. Intrachain disulfides connect C54-C66, C55-C71, and C61-C72. A 4-hydroxyproline; partial mark is found at P57 and P58. P68 carries the 4-hydroxyproline modification. The residue at position 73 (A73) is an Alanine amide.

The protein belongs to the conotoxin M superfamily. Post-translationally, hydroxylated; hydroxylations improve the ability to block Nav1.4/SCN4A sodium channels but does not affect folding. As to expression, expressed by the venom duct.

It is found in the secreted. Its function is as follows. Mu-conotoxins block voltage-gated sodium channels (Nav). This toxin potently blocks rat Nav1.4/SCN4A (IC(50)= 19-110 nM). It also moderately blocks rNav1.1/SCN1A (Kd=260 nM), rNav1.2/SCN2A (IC(50)=2.7-17.8 uM), and mNav1.6/SCN8A (IC(50)=680 nM). The inhibition is reversible. In vivo, induces paralysis to an isolated skeletal muscle preparation from frog (cutaneous pectoralis) within a few minutes. The protein is Mu-conotoxin GIIIA of Conus geographus (Geography cone).